The primary structure comprises 416 residues: Putative gustatory receptor 57a (416 aa).

Residues Met-1 to Val-13 lie on the Cytoplasmic side of the membrane. Residues Phe-14–Ile-34 form a helical membrane-spanning segment. The Extracellular segment spans residues Arg-35–Tyr-48. Residues Ser-49 to Ala-69 form a helical membrane-spanning segment. The Cytoplasmic portion of the chain corresponds to Glu-70–Leu-83. The helical transmembrane segment at Val-84 to Ile-104 threads the bilayer. Over Ser-105–Lys-143 the chain is Extracellular. A helical membrane pass occupies residues Asn-144 to Val-164. Over Gln-165–Arg-171 the chain is Cytoplasmic. A helical membrane pass occupies residues Ala-172–Gly-192. The Extracellular portion of the chain corresponds to Tyr-193–Arg-295. N-linked (GlcNAc...) asparagine glycosylation occurs at Asn-290. A helical transmembrane segment spans residues Met-296–Phe-316. At Tyr-317–Lys-374 the chain is on the cytoplasmic side. A helical transmembrane segment spans residues Val-375 to Met-395. At Thr-396 to Phe-416 the chain is on the extracellular side.

It belongs to the insect chemoreceptor superfamily. Gustatory receptor (GR) family. Gr57a subfamily. In terms of tissue distribution, in larvae, is expressed in neurons of the terminal external chemosensory organ as well as in the dorsal pharyngeal sense organ.

It is found in the cell membrane. Probable gustatory receptor which mediates acceptance or avoidance behavior, depending on its substrates. The chain is Putative gustatory receptor 57a (Gr57a) from Drosophila melanogaster (Fruit fly).